We begin with the raw amino-acid sequence, 93 residues long: Co-chaperonin GroES (93 aa).

Belongs to the GroES chaperonin family. Heptamer of 7 subunits arranged in a ring. Interacts with the chaperonin GroEL.

The protein resides in the cytoplasm. Together with the chaperonin GroEL, plays an essential role in assisting protein folding. The GroEL-GroES system forms a nano-cage that allows encapsulation of the non-native substrate proteins and provides a physical environment optimized to promote and accelerate protein folding. GroES binds to the apical surface of the GroEL ring, thereby capping the opening of the GroEL channel. This chain is Co-chaperonin GroES, found in Streptococcus gordonii (strain Challis / ATCC 35105 / BCRC 15272 / CH1 / DL1 / V288).